Reading from the N-terminus, the 358-residue chain is Peptide chain release factor 1 (358 aa).

Glutamine 233 carries the post-translational modification N5-methylglutamine.

This sequence belongs to the prokaryotic/mitochondrial release factor family. Post-translationally, methylated by PrmC. Methylation increases the termination efficiency of RF1.

The protein resides in the cytoplasm. Functionally, peptide chain release factor 1 directs the termination of translation in response to the peptide chain termination codons UAG and UAA. This is Peptide chain release factor 1 from Staphylococcus haemolyticus (strain JCSC1435).